A 385-amino-acid polypeptide reads, in one-letter code: Aldehyde dehydrogenase family 3 member B2 (385 aa).

107-112 (GSPRVG) provides a ligand contact to NAD(+). Residues Glu-129 and Cys-163 contribute to the active site. Cys-382 carries the post-translational modification Cysteine methyl ester. The S-geranylgeranyl cysteine moiety is linked to residue Cys-382. Positions 383-385 (TLL) are cleaved as a propeptide — removed in mature form.

This sequence belongs to the aldehyde dehydrogenase family. Geranylgeranylation is important for localization to lipid droplets and enzyme activity. In terms of tissue distribution, salivary gland. Expressed at protein level in placenta.

It is found in the lipid droplet. The enzyme catalyses an aldehyde + NAD(+) + H2O = a carboxylate + NADH + 2 H(+). The catalysed reaction is a long-chain fatty aldehyde + NAD(+) + H2O = a long-chain fatty acid + NADH + 2 H(+). It catalyses the reaction a medium-chain fatty aldehyde + NAD(+) + H2O = a medium-chain fatty acid + NADH + 2 H(+). It carries out the reaction hexadecanoate + NADH + 2 H(+) = hexadecanal + NAD(+) + H2O. The enzyme catalyses octanal + NAD(+) + H2O = octanoate + NADH + 2 H(+). Its pathway is alcohol metabolism; ethanol degradation; acetate from ethanol: step 2/2. Oxidizes medium and long chain fatty aldehydes in lipid droplets into non-toxic fatty acids. This chain is Aldehyde dehydrogenase family 3 member B2 (ALDH3B2), found in Homo sapiens (Human).